A 185-amino-acid polypeptide reads, in one-letter code: Ribosome-recycling factor (185 aa).

It belongs to the RRF family.

It is found in the cytoplasm. Responsible for the release of ribosomes from messenger RNA at the termination of protein biosynthesis. May increase the efficiency of translation by recycling ribosomes from one round of translation to another. The protein is Ribosome-recycling factor of Pseudomonas putida (strain GB-1).